Reading from the N-terminus, the 566-residue chain is Transmembrane protein 151B (566 aa).

The segment covering 1–11 has biased composition (low complexity); sequence MSPPGSAAGES. The tract at residues 1-25 is disordered; the sequence is MSPPGSAAGESAAGGGGGGGGPGVS. Positions 12 to 23 are enriched in gly residues; the sequence is AAGGGGGGGGPG. The next 2 helical transmembrane spans lie at 65–85 and 112–132; these read CLLLSLLMYGCLGAVAWCHVT and YVYIPLAFLLMLYAVYLVECW. The segment covering 495-512 has biased composition (polar residues); the sequence is VNEASCPTEQTRLSSQAS. The disordered stretch occupies residues 495–529; it reads VNEASCPTEQTRLSSQASMGDDEDDDEEEAGPPPP. A compositionally biased stretch (acidic residues) spans 514–524; sequence GDDEDDDEEEA.

This sequence belongs to the TMEM151 family.

The protein resides in the membrane. The polypeptide is Transmembrane protein 151B (TMEM151B) (Homo sapiens (Human)).